The chain runs to 486 residues: Coronin-1B (486 aa).

Ser-2 carries the post-translational modification Phosphoserine; by PKC. 5 WD repeats span residues 80 to 120 (GHTG…LTSP), 130 to 170 (GHTK…ELYR), 174 to 213 (LHPDLIYNVSWNRNGSLFCSACKDKSVRIIDPRRGTLVAE), 217 to 260 (AHEG…EPMA), and 265 to 305 (DSSN…PYIH). The disordered stretch occupies residues 404 to 444 (LKVSRRNVLSDSRPTSAARPAAPAPAAPAPAAAASSSLSGA). The segment covering 432 to 444 (APAAAASSSLSGA) has biased composition (low complexity). Residues 446–484 (EAGKLEEVMRELRALRALVKEQGERIGRLEEQLGRVENG) adopt a coiled-coil conformation.

The protein belongs to the WD repeat coronin family. In terms of assembly, forms homooligomers, but does not form complexes with the other coronins. Interacts with Arp2/3 complex components, including ACTR2, ARPC1B and ARPC2. Binds actin. In terms of processing, phosphorylated in vivo by PKC in response to cholinergic stimulation. Phosphorylation on Ser-2 regulates the interaction with the Arp2/3 complex and cell motility in fibroblasts. Phosphorylation does not seem to affect subcellular location.

The protein resides in the cytoplasm. The protein localises to the cytoskeleton. It is found in the stress fiber. Its function is as follows. Regulates leading edge dynamics and cell motility in fibroblasts. May be involved in cytokinesis and signal transduction. This chain is Coronin-1B (CORO1B), found in Oryctolagus cuniculus (Rabbit).